The sequence spans 377 residues: Glutamate 5-kinase (377 aa).

K15 serves as a coordination point for ATP. S56, D143, and N155 together coordinate substrate. Residue S175 to D176 coordinates ATP. One can recognise a PUA domain in the interval K281–S358.

It belongs to the glutamate 5-kinase family.

It is found in the cytoplasm. The catalysed reaction is L-glutamate + ATP = L-glutamyl 5-phosphate + ADP. The protein operates within amino-acid biosynthesis; L-proline biosynthesis; L-glutamate 5-semialdehyde from L-glutamate: step 1/2. Its function is as follows. Catalyzes the transfer of a phosphate group to glutamate to form L-glutamate 5-phosphate. The chain is Glutamate 5-kinase from Rhodopseudomonas palustris (strain BisA53).